Here is a 201-residue protein sequence, read N- to C-terminus: CASP-like protein 1F2 (201 aa).

Over 1-29 (MITSIATTTAGAFEVKSLGFIPYPSQPKR) the chain is Cytoplasmic. Residues 30–50 (IFFMAQVIFRILAIAFAVASI) form a helical membrane-spanning segment. The Extracellular portion of the chain corresponds to 51–78 (SAMVTSDQNVIVFGMDTAARYSYSSAFR). The helical transmembrane segment at 79-99 (FLVGANAVVCGFSVLSLIFVC) threads the bilayer. The Cytoplasmic segment spans residues 100–119 (LMSRRSEAILEKNYYLFLHD). A helical transmembrane segment spans residues 120–140 (MVMMVMMVSGCSAATAIGYVG). Over 141–162 (RYGEKEITWTAVCDFVGKFCNQ) the chain is Extracellular. Residues 163–183 (ALVSIVLAYLALFCYVALTTL) form a helical membrane-spanning segment. Topologically, residues 184-201 (AAHKLNHSSSTAAIRQNE) are cytoplasmic.

Belongs to the Casparian strip membrane proteins (CASP) family. In terms of assembly, homodimer and heterodimers.

It localises to the cell membrane. In Ricinus communis (Castor bean), this protein is CASP-like protein 1F2.